The following is a 245-amino-acid chain: tRNA1(Val) (adenine(37)-N6)-methyltransferase (245 aa).

This sequence belongs to the methyltransferase superfamily. tRNA (adenine-N(6)-)-methyltransferase family.

It localises to the cytoplasm. The enzyme catalyses adenosine(37) in tRNA1(Val) + S-adenosyl-L-methionine = N(6)-methyladenosine(37) in tRNA1(Val) + S-adenosyl-L-homocysteine + H(+). Its function is as follows. Specifically methylates the adenine in position 37 of tRNA(1)(Val) (anticodon cmo5UAC). The polypeptide is tRNA1(Val) (adenine(37)-N6)-methyltransferase (Shigella dysenteriae serotype 1 (strain Sd197)).